Consider the following 417-residue polypeptide: Divinyl chlorophyllide a 8-vinyl-reductase, chloroplastic (417 aa).

A chloroplast-targeting transit peptide spans 1–49 (MSLCSSFNVFASYSPKPKTIFKDSKFISQFQVKSSPLASTFHTNESSTS).

As to expression, highly expressed in leaves, stems and flower buds. Detected in roots.

The protein localises to the plastid. It is found in the chloroplast. The catalysed reaction is protochlorophyllide a + NADP(+) = 3,8-divinyl protochlorophyllide a + NADPH + H(+). Its pathway is porphyrin-containing compound metabolism; chlorophyll biosynthesis. Catalyzes the conversion of divinyl chlorophyllide to monovinyl chlorophyllide. Reduces the 8-vinyl group of the tetrapyrrole to an ethyl group using NADPH as the reductant. The best substrate is (3,8-divinyl)-chlorophyllide a (DV-Chlidea). Very low activity with (3,8-divinyl)-protochlorophyllide a (DV-Pchlidea) and (3,8-divinyl)-magnesium-protoporphyrin IX monomethyl ester (DV-MPE). No activity with (3,8-divinyl)-chlorophyllide b (DV-Chlideb), (3,8-divinyl)-magnesium-protoporphyrin IX (DV-Mg-Proto) and either (3,8-divinyl)-chlorophyll a (DV-Chla) or b (DV-Chlb). This chain is Divinyl chlorophyllide a 8-vinyl-reductase, chloroplastic (DVR), found in Arabidopsis thaliana (Mouse-ear cress).